A 327-amino-acid chain; its full sequence is Ferrochelatase (327 aa).

His196 and Glu277 together coordinate Fe cation.

Belongs to the ferrochelatase family.

It is found in the cytoplasm. It carries out the reaction heme b + 2 H(+) = protoporphyrin IX + Fe(2+). The protein operates within porphyrin-containing compound metabolism; protoheme biosynthesis; protoheme from protoporphyrin-IX: step 1/1. In terms of biological role, catalyzes the ferrous insertion into protoporphyrin IX. In Gloeobacter violaceus (strain ATCC 29082 / PCC 7421), this protein is Ferrochelatase.